A 137-amino-acid polypeptide reads, in one-letter code: Large ribosomal subunit protein uL16 (137 aa).

The protein belongs to the universal ribosomal protein uL16 family. In terms of assembly, part of the 50S ribosomal subunit.

Functionally, binds 23S rRNA and is also seen to make contacts with the A and possibly P site tRNAs. The protein is Large ribosomal subunit protein uL16 of Dinoroseobacter shibae (strain DSM 16493 / NCIMB 14021 / DFL 12).